A 370-amino-acid chain; its full sequence is Aminomethyltransferase (370 aa).

The protein belongs to the GcvT family. In terms of assembly, the glycine cleavage system is composed of four proteins: P, T, L and H.

The catalysed reaction is N(6)-[(R)-S(8)-aminomethyldihydrolipoyl]-L-lysyl-[protein] + (6S)-5,6,7,8-tetrahydrofolate = N(6)-[(R)-dihydrolipoyl]-L-lysyl-[protein] + (6R)-5,10-methylene-5,6,7,8-tetrahydrofolate + NH4(+). Its function is as follows. The glycine cleavage system catalyzes the degradation of glycine. The polypeptide is Aminomethyltransferase (Leptospira biflexa serovar Patoc (strain Patoc 1 / Ames)).